Here is a 365-residue protein sequence, read N- to C-terminus: DNA replication and repair protein RecF (365 aa).

30–37 lines the ATP pocket; the sequence is GANGQGKT.

The protein belongs to the RecF family.

It localises to the cytoplasm. The RecF protein is involved in DNA metabolism; it is required for DNA replication and normal SOS inducibility. RecF binds preferentially to single-stranded, linear DNA. It also seems to bind ATP. In Geobacter sulfurreducens (strain ATCC 51573 / DSM 12127 / PCA), this protein is DNA replication and repair protein RecF.